Here is a 148-residue protein sequence, read N- to C-terminus: NADH-quinone oxidoreductase subunit C (148 aa).

This sequence belongs to the complex I 30 kDa subunit family. NDH-1 is composed of 14 different subunits. Subunits NuoB, C, D, E, F, and G constitute the peripheral sector of the complex.

Its subcellular location is the cell membrane. The catalysed reaction is a quinone + NADH + 5 H(+)(in) = a quinol + NAD(+) + 4 H(+)(out). Its function is as follows. NDH-1 shuttles electrons from NADH, via FMN and iron-sulfur (Fe-S) centers, to quinones in the respiratory chain. The immediate electron acceptor for the enzyme in this species is believed to be a menaquinone. Couples the redox reaction to proton translocation (for every two electrons transferred, four hydrogen ions are translocated across the cytoplasmic membrane), and thus conserves the redox energy in a proton gradient. The chain is NADH-quinone oxidoreductase subunit C from Moorella thermoacetica (strain ATCC 39073 / JCM 9320).